The sequence spans 328 residues: 5'-AMP-activated protein kinase subunit gamma (328 aa).

CBS domains lie at 42-103, 123-186, 199-259, and 268-328; these read VSYR…PDKF, IQPY…CKEI, ISTN…YNDL, and MRRS…FAES. Residues I47, R150, R151, 171 to 174, 227 to 228, and 297 to 299 contribute to the ADP site; these read TQYR, SS, and RVH. R150 provides a ligand contact to AMP. R150 contacts ATP. Residue 227 to 228 participates in AMP binding; that stretch reads SS. 227–228 is a binding site for ATP; sequence SS. Residues R300 and 313–318 each bind ATP; that span reads VLTLSD. 315 to 318 serves as a coordination point for ADP; that stretch reads TLSD. 315 to 318 provides a ligand contact to AMP; that stretch reads TLSD.

This sequence belongs to the 5'-AMP-activated protein kinase gamma subunit family. AMPK is a heterotrimer of an alpha catalytic subunit, a beta and a gamma non-catalytic subunits.

It localises to the nucleus. The protein localises to the cytoplasm. Functionally, adenine nucleotides-binding subunit gamma of AMP-activated protein kinase (AMPK), an energy sensor protein kinase that plays a key role in regulating cellular energy metabolism. In response to reduction of intracellular ATP levels, AMPK activates energy-producing pathways and inhibits energy-consuming processes: inhibits protein, carbohydrate and lipid biosynthesis, as well as cell growth and proliferation. AMPK acts via direct phosphorylation of metabolic enzymes, and by longer-term effects via phosphorylation of transcription regulators. Gamma non-catalytic subunit mediates binding to AMP, ADP and ATP, leading to activate or inhibit AMPK: AMP-binding results in allosteric activation of alpha catalytic subunit (SNF1) both by inducing phosphorylation and preventing dephosphorylation of catalytic subunits. This Kluyveromyces lactis (strain ATCC 8585 / CBS 2359 / DSM 70799 / NBRC 1267 / NRRL Y-1140 / WM37) (Yeast) protein is 5'-AMP-activated protein kinase subunit gamma (SNF4).